A 425-amino-acid chain; its full sequence is Dihydroorotase (425 aa).

Residues histidine 56 and histidine 58 each coordinate Zn(2+). Substrate is bound by residues 58-60 (HYR) and asparagine 90. The Zn(2+) site is built by aspartate 148, histidine 175, and histidine 228. Asparagine 274 is a substrate binding site. Aspartate 301 lines the Zn(2+) pocket. Aspartate 301 is a catalytic residue. Substrate-binding positions include histidine 305 and 319–320 (FG).

Belongs to the metallo-dependent hydrolases superfamily. DHOase family. Class I DHOase subfamily. Requires Zn(2+) as cofactor.

It catalyses the reaction (S)-dihydroorotate + H2O = N-carbamoyl-L-aspartate + H(+). The protein operates within pyrimidine metabolism; UMP biosynthesis via de novo pathway; (S)-dihydroorotate from bicarbonate: step 3/3. Its function is as follows. Catalyzes the reversible cyclization of carbamoyl aspartate to dihydroorotate. The polypeptide is Dihydroorotase (Lactobacillus delbrueckii subsp. bulgaricus (strain ATCC 11842 / DSM 20081 / BCRC 10696 / JCM 1002 / NBRC 13953 / NCIMB 11778 / NCTC 12712 / WDCM 00102 / Lb 14)).